The following is a 337-amino-acid chain: UDP-3-O-acylglucosamine N-acyltransferase (337 aa).

Catalysis depends on histidine 238, which acts as the Proton acceptor.

This sequence belongs to the transferase hexapeptide repeat family. LpxD subfamily. Homotrimer.

It carries out the reaction a UDP-3-O-[(3R)-3-hydroxyacyl]-alpha-D-glucosamine + a (3R)-hydroxyacyl-[ACP] = a UDP-2-N,3-O-bis[(3R)-3-hydroxyacyl]-alpha-D-glucosamine + holo-[ACP] + H(+). Its pathway is bacterial outer membrane biogenesis; LPS lipid A biosynthesis. Functionally, catalyzes the N-acylation of UDP-3-O-acylglucosamine using 3-hydroxyacyl-ACP as the acyl donor. Is involved in the biosynthesis of lipid A, a phosphorylated glycolipid that anchors the lipopolysaccharide to the outer membrane of the cell. The protein is UDP-3-O-acylglucosamine N-acyltransferase of Xanthomonas euvesicatoria pv. vesicatoria (strain 85-10) (Xanthomonas campestris pv. vesicatoria).